The following is a 334-amino-acid chain: G-protein coupled receptor 12 (334 aa).

Over 1–48 the chain is Extracellular; sequence MNEDLKVNLSGLPRDYLDAAAAENISAAVSSRVPAVEPEPELVVNPWD. 2 N-linked (GlcNAc...) asparagine glycosylation sites follow: N8 and N24. Residues 49 to 69 traverse the membrane as a helical segment; it reads IVLCTSGTLISCENAIVVLII. Over 70-77 the chain is Cytoplasmic; sequence FHNPSLRA. A helical transmembrane segment spans residues 78–98; that stretch reads PMFLLIGSLALADLLAGIGLI. At 99–113 the chain is on the extracellular side; it reads TNFVFAYLLQSEATK. Residues 114 to 134 form a helical membrane-spanning segment; it reads LVTIGLIVASFSASVCSLLAI. Over 135–158 the chain is Cytoplasmic; sequence TVDRYLSLYYALTYHSERTVTFTY. Residues 159–179 traverse the membrane as a helical segment; that stretch reads VMLVMLWGTSICLGLLPVMGW. Residues 180–199 lie on the Extracellular side of the membrane; it reads NCLRDESTCSVVRPLTKNNA. A helical membrane pass occupies residues 200-220; it reads AILSVSFLFMFALMLQLYIQI. Topologically, residues 221 to 252 are cytoplasmic; sequence CKIVMRHAHQIALQHHFLATSHYVTTRKGVST. A helical transmembrane segment spans residues 253–273; sequence LAIILGTFAACWMPFTLYSLI. Residues 274 to 282 are Extracellular-facing; sequence ADYTYPSIY. Residues 283-303 traverse the membrane as a helical segment; that stretch reads TYATLLPATYNSIINPVIYAF. Over 304–334 the chain is Cytoplasmic; it reads RNQEIQKALCLICCGCIPSSLAQRARSPSDV. The S-palmitoyl cysteine moiety is linked to residue C317. Residues S330 and S332 each carry the phosphoserine modification.

The protein belongs to the G-protein coupled receptor 1 family.

It is found in the cell membrane. Its function is as follows. Promotes neurite outgrowth and blocks myelin inhibition in neurons. Receptor with constitutive G(s) signaling activity that stimulates cyclic AMP production. This Homo sapiens (Human) protein is G-protein coupled receptor 12 (GPR12).